Reading from the N-terminus, the 258-residue chain is Axonemal dynein light intermediate polypeptide 1 (258 aa).

Disordered regions lie at residues 1-60 (MIPP…CVPD) and 202-231 (DLER…EEKK). Residues 176–255 (MRKALQAEQG…LKAQLEGIIA (80 aa)) adopt a coiled-coil conformation.

This sequence belongs to the inner dynein arm light chain family. Interacts with CFAP45. Interacts with DYNC1H1. As to expression, predominantly expressed in the testis, also detected at lower levels in several tissues expressing cilia. Strongly expressed in elongating spermatid cells (at protein level).

It localises to the cell projection. The protein resides in the cilium. The protein localises to the flagellum. Its subcellular location is the dynein axonemal particle. It is found in the cytoplasm. Its function is as follows. Involved in sperm flagellum assembly. The polypeptide is Axonemal dynein light intermediate polypeptide 1 (Mus musculus (Mouse)).